Reading from the N-terminus, the 119-residue chain is Large ribosomal subunit protein uL14m (119 aa).

This sequence belongs to the universal ribosomal protein uL14 family.

The protein localises to the mitochondrion. The chain is Large ribosomal subunit protein uL14m from Tetrahymena pyriformis.